The sequence spans 509 residues: Cytochrome P450 monooxygenase hepC (509 aa).

A helical membrane pass occupies residues 5–25; sequence MIIPSFWTGTAIIGLVACAYV. Cysteine 454 is a heme binding site. Asparagine 491 carries N-linked (GlcNAc...) asparagine glycosylation.

The protein belongs to the cytochrome P450 family. Heme is required as a cofactor.

Its subcellular location is the membrane. The protein operates within secondary metabolite biosynthesis. Its function is as follows. Cytochrome P450 monooxygenase; part of the gene cluster that mediates the biosynthesis of heptelidic acid (HA), a sesquiterpene lactone that acts as an inhibitor of glyceraldehyde-3-phosphatedehydrogenase (GAPDH) and a growth inhibitor of the salt-tolerant lactic acid bacteria in soy sauce brewing. In Aspergillus oryzae (strain ATCC 42149 / RIB 40) (Yellow koji mold), this protein is Cytochrome P450 monooxygenase hepC.